A 274-amino-acid polypeptide reads, in one-letter code: Aliphatic sulfonates import ATP-binding protein SsuB 2 (274 aa).

In terms of domain architecture, ABC transporter spans 21 to 235 (VQLRNVVRQF…DSGQAGFQLI (215 aa)). 53–60 (GASGSGKT) contributes to the ATP binding site.

Belongs to the ABC transporter superfamily. Aliphatic sulfonates importer (TC 3.A.1.17.2) family. As to quaternary structure, the complex is composed of two ATP-binding proteins (SsuB), two transmembrane proteins (SsuC) and a solute-binding protein (SsuA).

The protein resides in the cell inner membrane. It catalyses the reaction ATP + H2O + aliphatic sulfonate-[sulfonate-binding protein]Side 1 = ADP + phosphate + aliphatic sulfonateSide 2 + [sulfonate-binding protein]Side 1.. Its function is as follows. Part of the ABC transporter complex SsuABC involved in aliphatic sulfonates import. Responsible for energy coupling to the transport system. The polypeptide is Aliphatic sulfonates import ATP-binding protein SsuB 2 (Pseudomonas syringae pv. syringae (strain B728a)).